Consider the following 263-residue polypeptide: Hatching enzyme 1.2 (263 aa).

Positions 1 to 19 (MDIRASLSILLLLFGLSQA) are cleaved as a signal peptide. A propeptide spans 20 to 64 (SPLREFEAIFVSEPETVDITTQILETNKGSSEVLFEGDVVLPKNR) (activation peptide). Residues 65-263 (NALICEDKSC…ILRINKLYGC (199 aa)) enclose the Peptidase M12A domain. Disulfide bonds link Cys-69-Cys-74, Cys-114-Cys-263, and Cys-135-Cys-155. His-163 provides a ligand contact to Zn(2+). Residue Glu-164 is part of the active site. 2 residues coordinate Zn(2+): His-167 and His-173.

Requires Zn(2+) as cofactor. As to expression, expressed in cells of the hatching gland.

It localises to the secreted. The catalysed reaction is Hydrolysis of the inner layer of fish egg envelope. Also hydrolysis of casein and small molecule substrates such as succinyl-Leu-Leu-Val-Tyr-|-7-(4-methyl)coumarylamide.. Its function is as follows. Metalloendopeptidase which participates in the breakdown of the egg envelope at the time of hatching. Cleaves the N-terminal regions of the zona pellucia glycoproteins ZP2 and ZP3, where it specifically recognizes the peptide sequences TVQQS-|-DYLIK (major site) and KLMLK-|-APEPF (minor site). The protein is Hatching enzyme 1.2 of Danio rerio (Zebrafish).